We begin with the raw amino-acid sequence, 459 residues long: UDP-N-acetylmuramoylalanine--D-glutamate ligase (459 aa).

Residue 131–137 (GANGKST) coordinates ATP.

The protein belongs to the MurCDEF family.

It is found in the cytoplasm. It carries out the reaction UDP-N-acetyl-alpha-D-muramoyl-L-alanine + D-glutamate + ATP = UDP-N-acetyl-alpha-D-muramoyl-L-alanyl-D-glutamate + ADP + phosphate + H(+). Its pathway is cell wall biogenesis; peptidoglycan biosynthesis. Its function is as follows. Cell wall formation. Catalyzes the addition of glutamate to the nucleotide precursor UDP-N-acetylmuramoyl-L-alanine (UMA). The polypeptide is UDP-N-acetylmuramoylalanine--D-glutamate ligase (Methylococcus capsulatus (strain ATCC 33009 / NCIMB 11132 / Bath)).